The primary structure comprises 391 residues: Ferrochelatase (391 aa).

Residues H196 and E281 each coordinate Fe cation.

It belongs to the ferrochelatase family.

The protein localises to the cytoplasm. The enzyme catalyses heme b + 2 H(+) = protoporphyrin IX + Fe(2+). Its pathway is porphyrin-containing compound metabolism; protoheme biosynthesis; protoheme from protoporphyrin-IX: step 1/1. Its function is as follows. Catalyzes the ferrous insertion into protoporphyrin IX. This chain is Ferrochelatase, found in Prochlorococcus marinus (strain AS9601).